Reading from the N-terminus, the 527-residue chain is Peptide chain release factor 3 (527 aa).

In terms of domain architecture, tr-type G spans 9–277; sequence AKRRTFAIIS…AVVDWAPRPL (269 aa). Residues 18 to 25, 86 to 90, and 140 to 143 contribute to the GTP site; these read SHPDAGKT, DTPGH, and NKLD.

Belongs to the TRAFAC class translation factor GTPase superfamily. Classic translation factor GTPase family. PrfC subfamily.

It localises to the cytoplasm. Functionally, increases the formation of ribosomal termination complexes and stimulates activities of RF-1 and RF-2. It binds guanine nucleotides and has strong preference for UGA stop codons. It may interact directly with the ribosome. The stimulation of RF-1 and RF-2 is significantly reduced by GTP and GDP, but not by GMP. In Pseudomonas fluorescens (strain Pf0-1), this protein is Peptide chain release factor 3.